Here is an 89-residue protein sequence, read N- to C-terminus: Large ribosomal subunit protein bL27 (89 aa).

Residues 1-24 (MAHKKAGGSSRNGRDSAGRRLGVK) are disordered.

It belongs to the bacterial ribosomal protein bL27 family.

This chain is Large ribosomal subunit protein bL27, found in Maricaulis maris (strain MCS10) (Caulobacter maris).